A 119-amino-acid chain; its full sequence is Large ribosomal subunit protein uL18 (119 aa).

Belongs to the universal ribosomal protein uL18 family. In terms of assembly, part of the 50S ribosomal subunit; part of the 5S rRNA/L5/L18/L25 subcomplex. Contacts the 5S and 23S rRNAs.

Its function is as follows. This is one of the proteins that bind and probably mediate the attachment of the 5S RNA into the large ribosomal subunit, where it forms part of the central protuberance. The chain is Large ribosomal subunit protein uL18 from Nitrosomonas europaea (strain ATCC 19718 / CIP 103999 / KCTC 2705 / NBRC 14298).